We begin with the raw amino-acid sequence, 444 residues long: Exodeoxyribonuclease 7 large subunit (444 aa).

This sequence belongs to the XseA family. As to quaternary structure, heterooligomer composed of large and small subunits.

It is found in the cytoplasm. The enzyme catalyses Exonucleolytic cleavage in either 5'- to 3'- or 3'- to 5'-direction to yield nucleoside 5'-phosphates.. Bidirectionally degrades single-stranded DNA into large acid-insoluble oligonucleotides, which are then degraded further into small acid-soluble oligonucleotides. The protein is Exodeoxyribonuclease 7 large subunit of Pseudoalteromonas translucida (strain TAC 125).